A 252-amino-acid polypeptide reads, in one-letter code: Transcriptional regulatory protein HptR (252 aa).

In terms of domain architecture, Response regulatory spans 3–118; sequence KVVICDDERI…QLEVILGRLV (116 aa). Asp55 is subject to 4-aspartylphosphate. One can recognise an HTH araC/xylS-type domain in the interval 153 to 250; sequence NQIVDQIKQS…QMSPSDYCKQ (98 aa). 2 consecutive DNA-binding regions (H-T-H motif) follow at residues 170-191 and 217-240; these read SDLI…KDHV and HYEI…KKYL.

Post-translationally, phosphorylated by HptS.

The protein localises to the cytoplasm. Member of the two-component regulatory system HptS/HptR that regulates genes involved in hexose phosphate transport system in response to changes in extracellular phosphate sources. Activates uhpT expression to facilitate glucose-6-phosphate/G6P utilization by directly binding to its promoter. Antagonizes CcpA-dependent transcription of a subset of CcpA-regulated genes involved in antibiotic susceptibility. The protein is Transcriptional regulatory protein HptR (hptR) of Staphylococcus aureus (strain Mu50 / ATCC 700699).